The primary structure comprises 506 residues: H/ACA ribonucleoprotein complex subunit DKC1 (506 aa).

Residues M1–Q26 are disordered. The active-site Nucleophile is D120. Residues H291–M366 enclose the PUA domain. Disordered regions lie at residues G391–G410 and V419–D506. Positions K421–S434 are enriched in basic and acidic residues. The span at E457 to K466 shows a compositional bias: basic residues.

It belongs to the pseudouridine synthase TruB family. In terms of assembly, part of the H/ACA small nucleolar ribonucleoprotein (H/ACA snoRNP) complex. The complex binds a box H/ACA small nucleolar RNA (snoRNA), which may target the specific site of modification within the RNA substrate.

The protein resides in the nucleus. The protein localises to the nucleolus. Its subcellular location is the cajal body. It catalyses the reaction uridine in 5S rRNA = pseudouridine in 5S rRNA. In terms of biological role, catalytic subunit of H/ACA small nucleolar ribonucleoprotein (H/ACA snoRNP) complex, which catalyzes pseudouridylation of rRNA. This involves the isomerization of uridine such that the ribose is subsequently attached to C5, instead of the normal N1. Pseudouridine ('psi') residues may serve to stabilize the conformation of rRNAs. Required for ribosome biogenesis and telomere maintenance. The chain is H/ACA ribonucleoprotein complex subunit DKC1 from Danio rerio (Zebrafish).